Consider the following 443-residue polypeptide: tRNA modification GTPase MnmE (443 aa).

Positions 23, 80, and 120 each coordinate (6S)-5-formyl-5,6,7,8-tetrahydrofolate. Residues 217-367 enclose the TrmE-type G domain; the sequence is GFEVVILGAP…LLAEIGRRAA (151 aa). GTP contacts are provided by residues 227-232, 246-252, and 271-274; these read NAGKSS, TDEPGTT, and DTAG. Mg(2+)-binding residues include Ser231 and Thr252. Position 443 (Lys443) interacts with (6S)-5-formyl-5,6,7,8-tetrahydrofolate.

The protein belongs to the TRAFAC class TrmE-Era-EngA-EngB-Septin-like GTPase superfamily. TrmE GTPase family. Homodimer. Heterotetramer of two MnmE and two MnmG subunits. The cofactor is K(+).

It is found in the cytoplasm. Exhibits a very high intrinsic GTPase hydrolysis rate. Involved in the addition of a carboxymethylaminomethyl (cmnm) group at the wobble position (U34) of certain tRNAs, forming tRNA-cmnm(5)s(2)U34. The polypeptide is tRNA modification GTPase MnmE (Mesorhizobium japonicum (strain LMG 29417 / CECT 9101 / MAFF 303099) (Mesorhizobium loti (strain MAFF 303099))).